A 104-amino-acid polypeptide reads, in one-letter code: Co-chaperonin GroES 2 (104 aa).

Belongs to the GroES chaperonin family. As to quaternary structure, heptamer of 7 subunits arranged in a ring. Interacts with the chaperonin GroEL.

The protein resides in the cytoplasm. In terms of biological role, together with the chaperonin GroEL, plays an essential role in assisting protein folding. The GroEL-GroES system forms a nano-cage that allows encapsulation of the non-native substrate proteins and provides a physical environment optimized to promote and accelerate protein folding. GroES binds to the apical surface of the GroEL ring, thereby capping the opening of the GroEL channel. The chain is Co-chaperonin GroES 2 from Mesorhizobium japonicum (strain LMG 29417 / CECT 9101 / MAFF 303099) (Mesorhizobium loti (strain MAFF 303099)).